A 181-amino-acid polypeptide reads, in one-letter code: MRISFFLLILAVIIGYAYGYSCPKPCYGNMCCSTSPGNKYYLTDFCGSTSACGPVPSCSGALYFTADSQRFGCGKHLNLCRGSKCVKAQIYDAGPAMWVEQDAGMMIIDASPTICHVLTGGSSCGWSDKFEITATVTSLTDSRPLGPFNVTEEEKAQLFIDHEIAMAQCEAEKTCNGFDLE.

The first 19 residues, Met-1–Gly-19, serve as a signal peptide directing secretion. The propeptide occupies Leu-139 to Glu-181.

This sequence belongs to the dictyostelium lysozyme family. Post-translationally, contains six disulfide bonds.

Its subcellular location is the cytoplasmic vesicle lumen. The catalysed reaction is Hydrolysis of (1-&gt;4)-beta-linkages between N-acetylmuramic acid and N-acetyl-D-glucosamine residues in a peptidoglycan and between N-acetyl-D-glucosamine residues in chitodextrins.. Has antibacterial activity. This chain is Lysozyme B (alyB), found in Dictyostelium discoideum (Social amoeba).